The sequence spans 775 residues: Polyribonucleotide nucleotidyltransferase (775 aa).

The tract at residues Asp-223–Asp-247 is disordered. A compositionally biased stretch (basic residues) spans Arg-231–Arg-243. Mg(2+) contacts are provided by Asp-567 and Asp-573. A KH domain is found at Pro-633–Ile-692. The 70-residue stretch at Gly-704–Val-773 folds into the S1 motif domain.

Belongs to the polyribonucleotide nucleotidyltransferase family. Mg(2+) is required as a cofactor.

The protein localises to the cytoplasm. It catalyses the reaction RNA(n+1) + phosphate = RNA(n) + a ribonucleoside 5'-diphosphate. Its function is as follows. Involved in mRNA degradation. Catalyzes the phosphorolysis of single-stranded polyribonucleotides processively in the 3'- to 5'-direction. The chain is Polyribonucleotide nucleotidyltransferase from Corynebacterium kroppenstedtii (strain DSM 44385 / JCM 11950 / CIP 105744 / CCUG 35717).